The primary structure comprises 320 residues: MQTRKTLSWIKEEITRSISVSLMIYIITGAYISNAYPIFAQQGYENPREATGRIVCANCHLANKPVGIEVPQAVLPDTVFEAVVRIPYDMQLKQVLANGKKGALNVGAVLILPEGFELAPPDRISPEMKEKIGNLSFQSYRPAKKNILVIGPVPGQKYSEITFPILSPDPAAKKDAHFLKYPIYVGGNRGRGQIYPDGSKSNNTVYNATAAGIVSKIIRKEKGGYEITITDAPEGRQVIDSIPPGPELLVSEGESIKLDQPLTSNPNVGGFGQGDAEIVLQDPLRVQGLLFFLASVILAQIFLVLKKKQFEKVQLSEMNF.

Residues 1-35 form the signal peptide; it reads MQTRKTLSWIKEEITRSISVSLMIYIITGAYISNA. The heme site is built by Y36, C56, C59, and H60. A helical membrane pass occupies residues 286-306; sequence VQGLLFFLASVILAQIFLVLK.

It belongs to the cytochrome f family. As to quaternary structure, the 4 large subunits of the cytochrome b6-f complex are cytochrome b6, subunit IV (17 kDa polypeptide, petD), cytochrome f and the Rieske protein, while the 4 small subunits are PetG, PetL, PetM and PetN. The complex functions as a dimer. It depends on heme as a cofactor.

Its subcellular location is the plastid. It localises to the chloroplast thylakoid membrane. Its function is as follows. Component of the cytochrome b6-f complex, which mediates electron transfer between photosystem II (PSII) and photosystem I (PSI), cyclic electron flow around PSI, and state transitions. The chain is Cytochrome f from Populus trichocarpa (Western balsam poplar).